A 603-amino-acid chain; its full sequence is Elongation factor 4 (603 aa).

Residues 2-184 form the tr-type G domain; that stretch reads NHIRNFSIIA…AIVHKMPAPR (183 aa). GTP contacts are provided by residues 14–19 and 131–134; these read DHGKST and NKMD.

It belongs to the TRAFAC class translation factor GTPase superfamily. Classic translation factor GTPase family. LepA subfamily.

Its subcellular location is the cell inner membrane. It carries out the reaction GTP + H2O = GDP + phosphate + H(+). Functionally, required for accurate and efficient protein synthesis under certain stress conditions. May act as a fidelity factor of the translation reaction, by catalyzing a one-codon backward translocation of tRNAs on improperly translocated ribosomes. Back-translocation proceeds from a post-translocation (POST) complex to a pre-translocation (PRE) complex, thus giving elongation factor G a second chance to translocate the tRNAs correctly. Binds to ribosomes in a GTP-dependent manner. The sequence is that of Elongation factor 4 from Variovorax paradoxus (strain S110).